The following is a 725-amino-acid chain: G-quartet DNA-binding protein TGP1 (725 aa).

Residues Lys-241–His-258 carry the Nuclear localization signal motif. Disordered stretches follow at residues Glu-252 to Thr-284 and Glu-468 to Gly-614. Positions Arg-256–Gln-277 are enriched in basic residues. The span at Glu-468–Arg-478 shows a compositional bias: basic and acidic residues. Low complexity predominate over residues Asn-517–Pro-544. Over residues Arg-545 to Asn-564 the composition is skewed to basic and acidic residues. The segment covering Asn-565–Asn-593 has biased composition (low complexity).

In terms of processing, the N-terminus is blocked.

The protein localises to the nucleus. Functionally, binds specifically to parallel G4-DNA, a four-stranded structure stabilized by tetrads of hydrogen-bonded guanines. The polypeptide is G-quartet DNA-binding protein TGP1 (TGP1) (Tetrahymena thermophila).